Reading from the N-terminus, the 1063-residue chain is Structural polyprotein (1063 aa).

The tract at residues 1-131 (MASTTPITME…LGPPTNPFQA (131 aa)) is disordered. The human C1QBP/SF2P32-binding stretch occupies residues 30 to 69 (GASQPRRPRPPRQRDSSTSGDDSGRDSGGPRRRRGNRGRG). Ser-46 carries the phosphoserine; by host modification. Positions 59–69 (PRRRRGNRGRG) are enriched in basic residues. Residues 70-87 (QRKDWSRAPPPPEERQEG) show a composition bias toward basic and acidic residues. A compositionally biased stretch (pro residues) spans 93-107 (APKPSRAPPQQPQPP). Cysteines 153 and 197 form a disulfide. Residues 279-300 (GAPQAFLAGLLLAAVAVGTARA) are functions as E2 signal peptide. Residues 301–534 (GLQPRVDMAA…LWLATANALS (234 aa)) are Extracellular-facing. 3 N-linked (GlcNAc...) asparagine; by host glycosylation sites follow: Asn-353, Asn-371, and Asn-429. A helical transmembrane segment spans residues 535–555 (LDHALAAFVLLVPWVLIFMVC). Over 556–582 (RRACRRRGAAAALTAVVLQGYNPPAYG) the chain is Cytoplasmic. A functions as E1 signal peptide region spans residues 563 to 582 (GAAAALTAVVLQGYNPPAYG). Over 583–1028 (EEAFTYLCTA…QTWAEWAAAH (446 aa)) the chain is Extracellular. Cystine bridges form between Cys-590/Cys-595, Cys-619/Cys-824, Cys-641/Cys-653, Cys-699/Cys-712, Cys-758/Cys-767, Cys-807/Cys-817, Cys-931/Cys-934, and Cys-950/Cys-983. An N-linked (GlcNAc...) asparagine; by host glycan is attached at Asn-658. 2 residues coordinate Ca(2+): Asn-670 and Ala-671. Positions 718 and 719 each coordinate Ca(2+). The N-linked (GlcNAc...) asparagine; by host glycan is linked to Asn-791. O-linked (GalNAc...) threonine; by host glycosylation is found at Thr-1011 and Thr-1012. Residues 1029–1049 (WWQLTLGAICALPLAGLLACC) form a helical membrane-spanning segment. Over 1050 to 1063 (AKCLYYLRGAIAPR) the chain is Extracellular.

In terms of assembly, homodimer; further assembles into homooligomer. Interacts with human C1QBP. Interacts (via N-terminus) with protease/methyltransferase p150. Heterodimer with spike glycoprotein E2. As to quaternary structure, heterodimer with spike glycoprotein E1. Post-translationally, structural polyprotein: Specific enzymatic cleavages in vivo yield mature proteins. Two signal peptidase-mediated cleavages within the polyprotein produce the structural proteins capsid, E2, and E1. The E2 signal peptide remains attached to the C-terminus of the capsid protein after cleavage by the signal peptidase. Another signal peptide at E2 C-terminus directs E1 to the ER, with a similar mechanism. Contains three N-linked oligosaccharides. In terms of processing, capsid is phosphorylated on Ser-46 by host. This phosphorylation negatively regulates capsid protein RNA-binding activity. Dephosphorylated by human PP1A.

It is found in the virion. The protein localises to the host cytoplasm. The protein resides in the host mitochondrion. Its subcellular location is the virion membrane. It localises to the host Golgi apparatus membrane. Capsid protein interacts with genomic RNA and assembles into icosahedric core particles 65-70 nm in diameter. The resulting nucleocapsid eventually associates with the cytoplasmic domain of E2 at the cell membrane, leading to budding and formation of mature virions from host Golgi membranes. Phosphorylation negatively regulates RNA-binding activity, possibly delaying virion assembly during the viral replication phase. Capsid protein dimerizes and becomes disulfide-linked in the virion. Modulates genomic RNA replication. Modulates subgenomic RNA synthesis by interacting with human C1QBP/SF2P32. Induces both perinuclear clustering of mitochondria and the formation of electron-dense intermitochondrial plaques, both hallmarks of rubella virus infected cells. Induces apoptosis when expressed in transfected cells. In terms of biological role, responsible for viral attachment to target host cell, by binding to the cell receptor. Its transport to the plasma membrane depends on interaction with E1 protein. The surface glycoproteins display an irregular helical organization and a pseudo-tetrameric inner nucleocapsid arrangement. Its function is as follows. Class II viral fusion protein. Fusion activity is inactive as long as E1 is bound to E2 in mature virion. After virus attachment to target cell and clathrin-mediated endocytosis, acidification of the endosome would induce dissociation of E1/E2 heterodimer and concomitant trimerization of the E1 subunits. This E1 homotrimer is fusion active, and promotes release of viral nucleocapsid in cytoplasm after endosome and viral membrane fusion. The cytoplasmic tail of spike glycoprotein E1 modulates virus release. The surface glycoproteins display an irregular helical organization and a pseudo-tetrameric inner nucleocapsid arrangement. The polypeptide is Structural polyprotein (Rubella virus (strain Cendehill) (RUBV)).